A 187-amino-acid chain; its full sequence is Superoxide dismutase [Cu-Zn] (187 aa).

The signal sequence occupies residues 1–23 (MMKMKTLLALAISGICAAGVANA). Cu cation contacts are provided by His80, His82, and His105. Cys87 and Cys183 are disulfide-bonded. Residues His105, His114, His123, and Asp126 each coordinate Zn(2+). His161 serves as a coordination point for Cu cation.

The protein belongs to the Cu-Zn superoxide dismutase family. Homodimer. Requires Cu cation as cofactor. Zn(2+) is required as a cofactor.

The protein resides in the periplasm. The enzyme catalyses 2 superoxide + 2 H(+) = H2O2 + O2. Functionally, destroys radicals which are normally produced within the cells and which are toxic to biological systems. May confer survival advantage by accelerating dismutation of superoxide of environmental origin to hydrogen peroxide, disruptive to the normal mucociliary clearance process in the host. This chain is Superoxide dismutase [Cu-Zn] (sodC), found in Haemophilus parainfluenzae.